The chain runs to 1101 residues: Cytospin-A (1101 aa).

Disordered stretches follow at residues 1 to 170 and 280 to 366; these read MRKA…NQIS and SDCG…SGNA. 2 stretches are compositionally biased toward polar residues: residues 29–48 and 64–86; these read ESSAPTASKVSRPGSSLSKA and ASNSVKVKKNSTTSYPNSGTAMS. The segment covering 93–110 has biased composition (low complexity); the sequence is RSSAGSSSNTKRSGSSGA. 2 stretches are compositionally biased toward basic and acidic residues: residues 114–125 and 151–165; these read GSSRERLRERSR and GRTDSDMIRMSKSKS. Residues 162 to 254 adopt a coiled-coil conformation; it reads KSKSDNQISD…LKDRLNALGF (93 aa). A compositionally biased stretch (low complexity) spans 333-355; it reads LTSSDDALDAPSSSSESEGLPST. Coiled coils occupy residues 373–427 and 492–785; these read CLTE…MDSL and QHLS…RGRV. A disordered region spans residues 923-978; the sequence is SISVSRRSSEELKRDISVPDGSSAPSLMVMTSPSPQLSLSSSSPTASVTPTARSRI. The segment covering 929–939 has biased composition (basic and acidic residues); that stretch reads RSSEELKRDIS. Residues 953–975 are compositionally biased toward low complexity; it reads TSPSPQLSLSSSSPTASVTPTAR. One can recognise a Calponin-homology (CH) domain in the interval 995-1100; the sequence is GSKRNALLKW…YVTSIYKYFE (106 aa).

It belongs to the cytospin-A family. As to quaternary structure, may interact with both microtubules and actin cytoskeleton.

The protein localises to the cytoplasm. It localises to the cytoskeleton. It is found in the spindle. Its subcellular location is the cell junction. The protein resides in the gap junction. Its function is as follows. Involved in cytokinesis and spindle organization. May play a role in actin cytoskeleton organization and microtubule stabilization and hence required for proper cell adhesion and migration. The protein is Cytospin-A (specc1l) of Xenopus tropicalis (Western clawed frog).